A 215-amino-acid polypeptide reads, in one-letter code: Adenylate kinase (215 aa).

An ATP-binding site is contributed by 10-15 (GAGKGT). The tract at residues 30-59 (STGDILRANVREGTELGLAAKAYMDKGELV) is NMP. AMP is bound by residues Thr31, Arg36, 57–59 (ELV), 85–88 (GYPR), and Gln92. Positions 126 to 162 (GRLMCKCGASYHIISNPPKKDNVCDICGGEVFQRADD) are LID. Residue Arg127 participates in ATP binding. Zn(2+) is bound by residues Cys130 and Cys132. Residue 135–136 (SY) coordinates ATP. 2 residues coordinate Zn(2+): Cys149 and Cys152. Residues Arg159 and Arg170 each contribute to the AMP site. Lys198 serves as a coordination point for ATP.

It belongs to the adenylate kinase family. As to quaternary structure, monomer.

It localises to the cytoplasm. It carries out the reaction AMP + ATP = 2 ADP. Its pathway is purine metabolism; AMP biosynthesis via salvage pathway; AMP from ADP: step 1/1. Its function is as follows. Catalyzes the reversible transfer of the terminal phosphate group between ATP and AMP. Plays an important role in cellular energy homeostasis and in adenine nucleotide metabolism. The polypeptide is Adenylate kinase (Methanosarcina acetivorans (strain ATCC 35395 / DSM 2834 / JCM 12185 / C2A)).